The primary structure comprises 322 residues: Transaldolase (322 aa).

Lysine 132 functions as the Schiff-base intermediate with substrate in the catalytic mechanism.

The protein belongs to the transaldolase family. Type 1 subfamily. Homodimer.

Its subcellular location is the cytoplasm. The catalysed reaction is D-sedoheptulose 7-phosphate + D-glyceraldehyde 3-phosphate = D-erythrose 4-phosphate + beta-D-fructose 6-phosphate. It functions in the pathway carbohydrate degradation; pentose phosphate pathway; D-glyceraldehyde 3-phosphate and beta-D-fructose 6-phosphate from D-ribose 5-phosphate and D-xylulose 5-phosphate (non-oxidative stage): step 2/3. In terms of biological role, transaldolase is important for the balance of metabolites in the pentose-phosphate pathway. This is Transaldolase from Protochlamydia amoebophila (strain UWE25).